We begin with the raw amino-acid sequence, 101 residues long: NAD(P)H-quinone oxidoreductase subunit 4L, chloroplastic (101 aa).

3 helical membrane passes run 2-22 (MLEHVLVLSAYLFSIGIYGLI), 32-52 (MCLELILNAVNINLVTFSDLF), and 61-81 (IFSIFVIAIAAAEAAIGPAIV).

It belongs to the complex I subunit 4L family. NDH is composed of at least 16 different subunits, 5 of which are encoded in the nucleus.

The protein localises to the plastid. Its subcellular location is the chloroplast thylakoid membrane. It carries out the reaction a plastoquinone + NADH + (n+1) H(+)(in) = a plastoquinol + NAD(+) + n H(+)(out). The enzyme catalyses a plastoquinone + NADPH + (n+1) H(+)(in) = a plastoquinol + NADP(+) + n H(+)(out). In terms of biological role, NDH shuttles electrons from NAD(P)H:plastoquinone, via FMN and iron-sulfur (Fe-S) centers, to quinones in the photosynthetic chain and possibly in a chloroplast respiratory chain. The immediate electron acceptor for the enzyme in this species is believed to be plastoquinone. Couples the redox reaction to proton translocation, and thus conserves the redox energy in a proton gradient. The polypeptide is NAD(P)H-quinone oxidoreductase subunit 4L, chloroplastic (Illicium oligandrum (Star anise)).